Here is a 60-residue protein sequence, read N- to C-terminus: Small ribosomal subunit protein bS21 (60 aa).

Positions 38–60 (KGVKRREKEKAARKRLQKKHRMY) are disordered.

The protein belongs to the bacterial ribosomal protein bS21 family.

The sequence is that of Small ribosomal subunit protein bS21 from Mycoplasmoides gallisepticum (strain R(low / passage 15 / clone 2)) (Mycoplasma gallisepticum).